Reading from the N-terminus, the 418-residue chain is tRNA(Met) cytidine acetate ligase (418 aa).

Residues G95, N161, and R186 each coordinate ATP.

It belongs to the TmcAL family.

Its subcellular location is the cytoplasm. It catalyses the reaction cytidine(34) in elongator tRNA(Met) + acetate + ATP = N(4)-acetylcytidine(34) in elongator tRNA(Met) + AMP + diphosphate. Its function is as follows. Catalyzes the formation of N(4)-acetylcytidine (ac(4)C) at the wobble position of elongator tRNA(Met), using acetate and ATP as substrates. First activates an acetate ion to form acetyladenylate (Ac-AMP) and then transfers the acetyl group to tRNA to form ac(4)C34. In Thermotoga petrophila (strain ATCC BAA-488 / DSM 13995 / JCM 10881 / RKU-1), this protein is tRNA(Met) cytidine acetate ligase.